The primary structure comprises 446 residues: N-succinylarginine dihydrolase (446 aa).

Substrate contacts are provided by residues 19-28, asparagine 110, and 137-138; these read SGLSYGNVAS and HR. Residue glutamate 174 is part of the active site. Position 214 (arginine 214) interacts with substrate. Histidine 250 is an active-site residue. The substrate site is built by aspartate 252 and asparagine 363. The active-site Nucleophile is the cysteine 369.

It belongs to the succinylarginine dihydrolase family. Homodimer.

It carries out the reaction N(2)-succinyl-L-arginine + 2 H2O + 2 H(+) = N(2)-succinyl-L-ornithine + 2 NH4(+) + CO2. It participates in amino-acid degradation; L-arginine degradation via AST pathway; L-glutamate and succinate from L-arginine: step 2/5. Catalyzes the hydrolysis of N(2)-succinylarginine into N(2)-succinylornithine, ammonia and CO(2). The sequence is that of N-succinylarginine dihydrolase from Hahella chejuensis (strain KCTC 2396).